We begin with the raw amino-acid sequence, 284 residues long: Adenylate kinase 1, chloroplastic (284 aa).

The N-terminal 36 residues, 1 to 36 (MARLVRVARSSSLFGFGNRFYSTSAEASHASSPSPF), are a transit peptide targeting the chloroplast. Residue 61-66 (GVGKGT) coordinates ATP. The NMP stretch occupies residues 81-110 (ATGDLVREELASSGPLSQKLSEIVNQGKLV). Residues threonine 82, arginine 87, 108-110 (KLV), 138-141 (GFPR), and glutamine 145 each bind AMP. Residues 174-222 (GRRTCSQCGKGFNVAHINLKGENGRPGISMDPLLPPHQCMSKLVTRADD) form an LID region. Position 175 (arginine 175) interacts with ATP. 2 residues coordinate AMP: arginine 219 and arginine 230. An ATP-binding site is contributed by glycine 258.

This sequence belongs to the adenylate kinase family. As to quaternary structure, monomer. As to expression, highly expressed in flowers and at lower levels in roots, leaves and stems.

The protein resides in the plastid. It localises to the chloroplast stroma. It carries out the reaction AMP + ATP = 2 ADP. Its function is as follows. Catalyzes the reversible transfer of the terminal phosphate group between ATP and AMP. Plays an important role in cellular energy homeostasis, adenine nucleotide metabolism and plant growth. In Arabidopsis thaliana (Mouse-ear cress), this protein is Adenylate kinase 1, chloroplastic (ADK).